A 215-amino-acid polypeptide reads, in one-letter code: Adenylate kinase (215 aa).

Residue 10-15 participates in ATP binding; it reads GAGKGT. Residues 30-59 form an NMP region; that stretch reads STGDMFRAAMKNETEMGKLAKSFIDKGELV. AMP-binding positions include threonine 31, arginine 36, 57 to 59, 86 to 89, and glutamine 93; these read ELV and GYPR. The LID stretch occupies residues 127-165; sequence GRYICRNCGATYHKIFNPTKVEGVCDVCGSHDLYQRADD. Arginine 128 provides a ligand contact to ATP. 2 residues coordinate Zn(2+): cysteine 131 and cysteine 134. 137–138 contacts ATP; it reads TY. Zn(2+) contacts are provided by cysteine 151 and cysteine 154. Residues arginine 162 and arginine 173 each contribute to the AMP site. Glutamine 201 contributes to the ATP binding site.

Belongs to the adenylate kinase family. In terms of assembly, monomer.

It localises to the cytoplasm. The enzyme catalyses AMP + ATP = 2 ADP. It functions in the pathway purine metabolism; AMP biosynthesis via salvage pathway; AMP from ADP: step 1/1. In terms of biological role, catalyzes the reversible transfer of the terminal phosphate group between ATP and AMP. Plays an important role in cellular energy homeostasis and in adenine nucleotide metabolism. This chain is Adenylate kinase, found in Lactococcus lactis subsp. lactis (strain IL1403) (Streptococcus lactis).